Reading from the N-terminus, the 153-residue chain is uncharacterized protein (153 aa).

3 consecutive transmembrane segments (helical) span residues 17 to 37, 44 to 64, and 118 to 138; these read ITLI…SMFF, FLLC…IGMG, and FVFI…TLII.

The protein to M.jannaschii MJ0129 and MJ0554.

It localises to the cell membrane. This is an uncharacterized protein from Methanocaldococcus jannaschii (strain ATCC 43067 / DSM 2661 / JAL-1 / JCM 10045 / NBRC 100440) (Methanococcus jannaschii).